The primary structure comprises 508 residues: ATP synthase subunit alpha, chloroplastic (508 aa).

172–179 is a binding site for ATP; the sequence is GDRQTGKT.

The protein belongs to the ATPase alpha/beta chains family. F-type ATPases have 2 components, CF(1) - the catalytic core - and CF(0) - the membrane proton channel. CF(1) has five subunits: alpha(3), beta(3), gamma(1), delta(1), epsilon(1). CF(0) has four main subunits: a, b, b' and c.

It is found in the plastid. The protein resides in the chloroplast thylakoid membrane. It carries out the reaction ATP + H2O + 4 H(+)(in) = ADP + phosphate + 5 H(+)(out). Functionally, produces ATP from ADP in the presence of a proton gradient across the membrane. The alpha chain is a regulatory subunit. The chain is ATP synthase subunit alpha, chloroplastic from Angiopteris evecta (Mule's foot fern).